A 443-amino-acid polypeptide reads, in one-letter code: MSRADTIFALSTPMGKSGVAVIRVSGHDALKSMQLLGVKEPVRSRVATCKTLYDKKRQPIDQAVVLYFPGPGSFTGEDVVELQVHGSLAVIRLLFEELQTVFRIAEPGEFSLRAFLNGKIDLTRAEGIADLVNSETEAQLRQAFAQSSGFLERLYEEWRSSLVDILSDLEAYIDFPDDVSPQILRSVHDRVKELHNSLERHLDDGHRGERLRHGMRVAILGKPNVGKSTLFNHLARRDMAIVSEYPGTTRDVLEAHVDIGGYPFIVVDTAGIRESTDFVEREGIMRAKSEAATADIRIMLFPHSEAGNLGVHEAIEGGDDGKTIYVLSKADSAKEGETRIIEGKQFYLVSVHTNLGVDSLLSALKERAIDGFPKSGDVLITSQRHRGHLQSAAKVISDITDEMPAEIVAEYLRLATKEIGKVTGAVYGDDILDNIFKRFCIGK.

3 residues coordinate (6S)-5-formyl-5,6,7,8-tetrahydrofolate: R23, E81, and K119. A TrmE-type G domain is found at 214 to 369 (GMRVAILGKP…LLSALKERAI (156 aa)). GTP contacts are provided by residues 224–229 (NVGKST), 243–249 (SEYPGTT), and 268–271 (DTAG). The Mg(2+) site is built by S228 and T249. K443 lines the (6S)-5-formyl-5,6,7,8-tetrahydrofolate pocket.

It belongs to the TRAFAC class TrmE-Era-EngA-EngB-Septin-like GTPase superfamily. TrmE GTPase family. As to quaternary structure, homodimer. Heterotetramer of two MnmE and two MnmG subunits. K(+) is required as a cofactor.

The protein resides in the cytoplasm. Its function is as follows. Exhibits a very high intrinsic GTPase hydrolysis rate. Involved in the addition of a carboxymethylaminomethyl (cmnm) group at the wobble position (U34) of certain tRNAs, forming tRNA-cmnm(5)s(2)U34. The polypeptide is tRNA modification GTPase MnmE (Anaplasma marginale (strain St. Maries)).